The primary structure comprises 197 residues: Probable nicotinate-nucleotide adenylyltransferase (197 aa).

Belongs to the NadD family.

The enzyme catalyses nicotinate beta-D-ribonucleotide + ATP + H(+) = deamido-NAD(+) + diphosphate. It participates in cofactor biosynthesis; NAD(+) biosynthesis; deamido-NAD(+) from nicotinate D-ribonucleotide: step 1/1. Functionally, catalyzes the reversible adenylation of nicotinate mononucleotide (NaMN) to nicotinic acid adenine dinucleotide (NaAD). This Neisseria meningitidis serogroup C (strain 053442) protein is Probable nicotinate-nucleotide adenylyltransferase.